The following is a 369-amino-acid chain: Methionine import ATP-binding protein MetN 2 (369 aa).

The ABC transporter domain occupies 33–270 (VRFIGLGKTY…PRHEVTRTLL (238 aa)). 67 to 74 (GRSGAGKS) serves as a coordination point for ATP.

It belongs to the ABC transporter superfamily. Methionine importer (TC 3.A.1.24) family. The complex is composed of two ATP-binding proteins (MetN), two transmembrane proteins (MetI) and a solute-binding protein (MetQ).

Its subcellular location is the cell inner membrane. The catalysed reaction is L-methionine(out) + ATP + H2O = L-methionine(in) + ADP + phosphate + H(+). It carries out the reaction D-methionine(out) + ATP + H2O = D-methionine(in) + ADP + phosphate + H(+). Functionally, part of the ABC transporter complex MetNIQ involved in methionine import. Responsible for energy coupling to the transport system. In Pseudomonas putida (strain ATCC 47054 / DSM 6125 / CFBP 8728 / NCIMB 11950 / KT2440), this protein is Methionine import ATP-binding protein MetN 2.